The primary structure comprises 112 residues: DNA-binding protein Memar_1972 (112 aa).

The interval 14–35 (MEQMQRQAMDQQGMEEEAARQQ) is disordered.

It belongs to the PDCD5 family.

The sequence is that of DNA-binding protein Memar_1972 from Methanoculleus marisnigri (strain ATCC 35101 / DSM 1498 / JR1).